The chain runs to 72 residues: Small, acid-soluble spore protein C (72 aa).

The protein belongs to the alpha/beta-type SASP family.

SASP are bound to spore DNA. They are double-stranded DNA-binding proteins that cause DNA to change to an a-like conformation. They protect the DNA backbone from chemical and enzymatic cleavage and are thus involved in dormant spore's high resistance to UV light. The chain is Small, acid-soluble spore protein C (sasP-C) from Priestia megaterium (Bacillus megaterium).